An 860-amino-acid polypeptide reads, in one-letter code: DNA primase (860 aa).

The CHC2-type zinc finger occupies 804 to 842 (CLNRQHRGNRDNVLVYIQLKADGNRLILILWSTCFATKC).

Belongs to the herpesviridae DNA primase family. In terms of assembly, associates with the helicase and the primase-associated factor to form the helicase-primase factor.

The protein localises to the host nucleus. In terms of biological role, essential component of the helicase/primase complex. Unwinds the DNA at the replication forks and generates single-stranded DNA for both leading and lagging strand synthesis. The primase initiates primer synthesis and thereby produces large amount of short RNA primers on the lagging strand that the polymerase elongates using dNTPs. This is DNA primase (U43) from Homo sapiens (Human).